The primary structure comprises 778 residues: Receptor like protein 28 (778 aa).

The signal sequence occupies residues 1 to 24 (MSGSHLRLRFLSLLLLCCVSSSTS). The Extracellular segment spans residues 25–739 (SLFTFSYPVL…EEQEQVLNWK (715 aa)). N-linked (GlcNAc...) asparagine glycosylation is found at Asn-60, Asn-72, Asn-93, Asn-106, Asn-111, Asn-147, Asn-170, and Asn-173. LRR repeat units follow at residues 99–123 (FHQL…EFGN), 125–147 (NKVE…SFSN), 148–171 (LSQL…VQNL), 172–195 (TNLS…LLMM), and 197–219 (FLSY…TSSK). One copy of the LRR 6; degenerate repeat lies at 220-240 (LEILYLGLKPFEGQILEPISK). LRR repeat units follow at residues 241-265 (LINL…LFSS), 266-291 (LKSL…LYIP), 293-313 (TLEK…ILKT), 314-338 (LQKL…LWRL), 340-363 (RLRS…VLVN), and 364-387 (SSME…PLSI). Asn-253 carries an N-linked (GlcNAc...) asparagine glycan. Asn-348 and Asn-363 each carry an N-linked (GlcNAc...) asparagine glycan. An LRR 13; degenerate repeat occupies 388 to 407 (KAFSAGYNNFSGEIPLSICN). Asn-396, Asn-407, Asn-420, Asn-431, and Asn-476 each carry an N-linked (GlcNAc...) asparagine glycan. LRR repeat units lie at residues 408–429 (RSSL…PQCL), 430–453 (SNLT…LCAG), 455–477 (SLQT…LLNC), 479–500 (SLEF…WLKA), 501–525 (LPNL…HQSP), 528–552 (FPEL…YFVN), 601–625 (LNSY…IGLL), 626–649 (KELI…LANA), 650–673 (TELE…LKTL), and 678–700 (YINV…SSFE). 2 N-linked (GlcNAc...) asparagine glycosylation sites follow: Asn-632 and Asn-648. Residue Asn-680 is glycosylated (N-linked (GlcNAc...) asparagine). A helical transmembrane segment spans residues 740–760 (AVATGYGTGLLLGLAIAQVIA). Topologically, residues 761 to 778 (SYKPDWLVKIIGLFRFCF) are cytoplasmic.

The protein belongs to the RLP family.

The protein localises to the cell membrane. The sequence is that of Receptor like protein 28 from Arabidopsis thaliana (Mouse-ear cress).